The primary structure comprises 352 residues: Isopentenyl-diphosphate delta-isomerase (352 aa).

Position 6–7 (6–7 (RK)) interacts with substrate. FMN-binding positions include 63–65 (AMT), Ser-93, and Asn-122. Substrate is bound at residue 93-95 (SQR). Gln-160 serves as a coordination point for substrate. Glu-161 contacts Mg(2+). FMN contacts are provided by residues Lys-192, Thr-221, 271–273 (GIR), and 292–293 (SQ).

The protein belongs to the IPP isomerase type 2 family. Homooctamer. Dimer of tetramers. Requires FMN as cofactor. The cofactor is NADPH. It depends on Mg(2+) as a cofactor.

It is found in the cytoplasm. It carries out the reaction isopentenyl diphosphate = dimethylallyl diphosphate. Functionally, involved in the biosynthesis of isoprenoids. Catalyzes the 1,3-allylic rearrangement of the homoallylic substrate isopentenyl (IPP) to its allylic isomer, dimethylallyl diphosphate (DMAPP). The chain is Isopentenyl-diphosphate delta-isomerase from Pyrobaculum arsenaticum (strain DSM 13514 / JCM 11321 / PZ6).